Consider the following 601-residue polypeptide: Elongation factor 4 (601 aa).

Positions 7 to 189 (SLIRNFSIIA…ALVTRLPPPV (183 aa)) constitute a tr-type G domain. GTP-binding positions include 19-24 (DHGKST) and 136-139 (NKVD).

It belongs to the TRAFAC class translation factor GTPase superfamily. Classic translation factor GTPase family. LepA subfamily.

It localises to the cell inner membrane. It catalyses the reaction GTP + H2O = GDP + phosphate + H(+). In terms of biological role, required for accurate and efficient protein synthesis under certain stress conditions. May act as a fidelity factor of the translation reaction, by catalyzing a one-codon backward translocation of tRNAs on improperly translocated ribosomes. Back-translocation proceeds from a post-translocation (POST) complex to a pre-translocation (PRE) complex, thus giving elongation factor G a second chance to translocate the tRNAs correctly. Binds to ribosomes in a GTP-dependent manner. This chain is Elongation factor 4, found in Gluconacetobacter diazotrophicus (strain ATCC 49037 / DSM 5601 / CCUG 37298 / CIP 103539 / LMG 7603 / PAl5).